The following is a 201-amino-acid chain: Small ribosomal subunit protein uS4c (201 aa).

The tract at residues 16 to 37 (GALPGLTSKRPRSGSDLRNQSR) is disordered. The S4 RNA-binding domain maps to 89–152 (MRLDNTLFRL…RSRTLIQNHI (64 aa)).

The protein belongs to the universal ribosomal protein uS4 family. In terms of assembly, part of the 30S ribosomal subunit. Contacts protein S5. The interaction surface between S4 and S5 is involved in control of translational fidelity.

The protein localises to the plastid. The protein resides in the chloroplast. Functionally, one of the primary rRNA binding proteins, it binds directly to 16S rRNA where it nucleates assembly of the body of the 30S subunit. In terms of biological role, with S5 and S12 plays an important role in translational accuracy. In Chloranthus spicatus (Chulantree), this protein is Small ribosomal subunit protein uS4c (rps4).